Here is a 429-residue protein sequence, read N- to C-terminus: Histidine--tRNA ligase (429 aa).

Belongs to the class-II aminoacyl-tRNA synthetase family. In terms of assembly, homodimer.

The protein localises to the cytoplasm. The enzyme catalyses tRNA(His) + L-histidine + ATP = L-histidyl-tRNA(His) + AMP + diphosphate + H(+). In Acidovorax ebreus (strain TPSY) (Diaphorobacter sp. (strain TPSY)), this protein is Histidine--tRNA ligase.